The sequence spans 335 residues: L-threo-3-deoxy-hexylosonate aldolase (335 aa).

50 to 51 (SN) contacts substrate. The active-site Schiff-base intermediate with substrate is lysine 175.

It belongs to the DapA family.

The enzyme catalyses 2-dehydro-3-deoxy-L-galactonate = L-glyceraldehyde + pyruvate. The protein operates within carbohydrate acid metabolism. Its function is as follows. Mediates the conversion of 2-dehydro-3-deoxy-L-galactonate to pyruvate and L-glyceraldehyde in D-galacturonate catabolic process. The sequence is that of L-threo-3-deoxy-hexylosonate aldolase (gaaC) from Aspergillus niger.